Consider the following 446-residue polypeptide: Telomere-binding protein 51 kDa subunit (446 aa).

This sequence belongs to the telombin family. In terms of assembly, monomer.

The protein localises to the nucleus. Its subcellular location is the chromosome. It is found in the telomere. May function as protective capping of the single-stranded telomeric overhang. May also participate in telomere length regulation during DNA replication. Binds specifically to the T4G4-containing extension on the 3'strand and protects this region of the telomere from nuclease digestion and chemical modification. This is Telomere-binding protein 51 kDa subunit from Euplotes crassus.